Reading from the N-terminus, the 93-residue chain is Pyrimidine/purine nucleoside phosphorylase (93 aa).

This sequence belongs to the nucleoside phosphorylase PpnP family.

The enzyme catalyses a purine D-ribonucleoside + phosphate = a purine nucleobase + alpha-D-ribose 1-phosphate. It catalyses the reaction adenosine + phosphate = alpha-D-ribose 1-phosphate + adenine. It carries out the reaction cytidine + phosphate = cytosine + alpha-D-ribose 1-phosphate. The catalysed reaction is guanosine + phosphate = alpha-D-ribose 1-phosphate + guanine. The enzyme catalyses inosine + phosphate = alpha-D-ribose 1-phosphate + hypoxanthine. It catalyses the reaction thymidine + phosphate = 2-deoxy-alpha-D-ribose 1-phosphate + thymine. It carries out the reaction uridine + phosphate = alpha-D-ribose 1-phosphate + uracil. The catalysed reaction is xanthosine + phosphate = alpha-D-ribose 1-phosphate + xanthine. In terms of biological role, catalyzes the phosphorolysis of diverse nucleosides, yielding D-ribose 1-phosphate and the respective free bases. Can use uridine, adenosine, guanosine, cytidine, thymidine, inosine and xanthosine as substrates. Also catalyzes the reverse reactions. In Shewanella pealeana (strain ATCC 700345 / ANG-SQ1), this protein is Pyrimidine/purine nucleoside phosphorylase.